A 205-amino-acid polypeptide reads, in one-letter code: Small ribosomal subunit protein uS5 (205 aa).

Residues 49–112 enclose the S5 DRBM domain; the sequence is LVDEVLCIDM…TNAKLNIVKV (64 aa).

It belongs to the universal ribosomal protein uS5 family. Part of the 30S ribosomal subunit. Contacts protein S4.

In terms of biological role, with S4 and S12 plays an important role in translational accuracy. This chain is Small ribosomal subunit protein uS5, found in Methanocorpusculum labreanum (strain ATCC 43576 / DSM 4855 / Z).